The following is a 101-amino-acid chain: Protein Tat (101 aa).

Over residues 1–12 the composition is skewed to basic and acidic residues; the sequence is MDPVDPRLEPWK. The disordered stretch occupies residues 1 to 20; that stretch reads MDPVDPRLEPWKHPGSQPKA. Residues 1 to 24 are interaction with human CREBBP; the sequence is MDPVDPRLEPWKHPGSQPKAACTS. The transactivation stretch occupies residues 1–48; it reads MDPVDPRLEPWKHPGSQPKAACTSCYCKKCCFHCQVCFTTKGLGISYG. The Zn(2+) site is built by C22, C25, and C27. The segment at 22–37 is cysteine-rich; that stretch reads CTSCYCKKCCFHCQVC. K28 is modified (N6-acetyllysine; by host PCAF). C30, H33, C34, and C37 together coordinate Zn(2+). The segment at 38 to 48 is core; it reads FTTKGLGISYG. Residues 48–57 show a composition bias toward basic residues; the sequence is GRKKRRQRRR. The disordered stretch occupies residues 48–101; it reads GRKKRRQRRRAPQDSQTHQVSLPKQPASQARGDPTGPKESKKKVERETETDPVD. Positions 49–57 match the Nuclear localization signal, RNA-binding (TAR), and protein transduction motif; sequence RKKRRQRRR. Residues 49–86 are interaction with the host capping enzyme RNGTT; the sequence is RKKRRQRRRAPQDSQTHQVSLPKQPASQARGDPTGPKE. An N6-acetyllysine; by host EP300 and GCN5L2 mark is found at K50 and K51. R52 and R53 each carry asymmetric dimethylarginine; by host PRMT6. Residues 60 to 75 are compositionally biased toward polar residues; the sequence is QDSQTHQVSLPKQPAS. K71 participates in a covalent cross-link: Glycyl lysine isopeptide (Lys-Gly) (interchain with G-Cter in ubiquitin). The Cell attachment site motif lies at 78–80; it reads RGD. A compositionally biased stretch (basic and acidic residues) spans 83-101; the sequence is GPKESKKKVERETETDPVD.

The protein belongs to the lentiviruses Tat family. In terms of assembly, interacts with host CCNT1. Associates with the P-TEFb complex composed at least of Tat, P-TEFb (CDK9 and CCNT1), TAR RNA, RNA Pol II. Recruits the HATs CREBBP, TAF1/TFIID, EP300, PCAF and GCN5L2. Interacts with host KAT5/Tip60; this interaction targets the latter to degradation. Interacts with the host deacetylase SIRT1. Interacts with host capping enzyme RNGTT; this interaction stimulates RNGTT. Binds to host KDR, and to the host integrins ITGAV/ITGB3 and ITGA5/ITGB1. Interacts with host KPNB1/importin beta-1 without previous binding to KPNA1/importin alpha-1. Interacts with EIF2AK2. Interacts with host nucleosome assembly protein NAP1L1; this interaction may be required for the transport of Tat within the nucleus, since the two proteins interact at the nuclear rim. Interacts with host C1QBP/SF2P32; this interaction involves lysine-acetylated Tat. Interacts with the host chemokine receptors CCR2, CCR3 and CXCR4. Interacts with host DPP4/CD26; this interaction may trigger an anti-proliferative effect. Interacts with host LDLR. Interacts with the host extracellular matrix metalloproteinase MMP1. Interacts with host PRMT6; this interaction mediates Tat's methylation. Interacts with, and is ubiquitinated by MDM2/Hdm2. Interacts with host PSMC3 and HTATIP2. Interacts with STAB1; this interaction may overcome SATB1-mediated repression of IL2 and IL2RA (interleukin) in T cells by binding to the same domain than HDAC1. Interacts (when acetylated) with human CDK13, thereby increasing HIV-1 mRNA splicing and promoting the production of the doubly spliced HIV-1 protein Nef. Interacts with host TBP; this interaction modulates the activity of transcriptional pre-initiation complex. Interacts with host RELA. Interacts with host PLSCR1; this interaction negatively regulates Tat transactivation activity by altering its subcellular distribution. Post-translationally, asymmetrical arginine methylation by host PRMT6 seems to diminish the transactivation capacity of Tat and affects the interaction with host CCNT1. In terms of processing, acetylation by EP300, CREBBP, GCN5L2/GCN5 and PCAF regulates the transactivation activity of Tat. EP300-mediated acetylation of Lys-50 promotes dissociation of Tat from the TAR RNA through the competitive binding to PCAF's bromodomain. In addition, the non-acetylated Tat's N-terminus can also interact with PCAF. PCAF-mediated acetylation of Lys-28 enhances Tat's binding to CCNT1. Lys-50 is deacetylated by SIRT1. Polyubiquitination by host MDM2 does not target Tat to degradation, but activates its transactivation function and fosters interaction with CCNT1 and TAR RNA. Post-translationally, phosphorylated by EIF2AK2 on serine and threonine residues adjacent to the basic region important for TAR RNA binding and function. Phosphorylation of Tat by EIF2AK2 is dependent on the prior activation of EIF2AK2 by dsRNA.

The protein localises to the host nucleus. It is found in the host nucleolus. Its subcellular location is the host cytoplasm. The protein resides in the secreted. In terms of biological role, transcriptional activator that increases RNA Pol II processivity, thereby increasing the level of full-length viral transcripts. Recognizes a hairpin structure at the 5'-LTR of the nascent viral mRNAs referred to as the transactivation responsive RNA element (TAR) and recruits the cyclin T1-CDK9 complex (P-TEFb complex) that will in turn hyperphosphorylate the RNA polymerase II to allow efficient elongation. The CDK9 component of P-TEFb and other Tat-activated kinases hyperphosphorylate the C-terminus of RNA Pol II that becomes stabilized and much more processive. Other factors such as HTATSF1/Tat-SF1, SUPT5H/SPT5, and HTATIP2 are also important for Tat's function. Besides its effect on RNA Pol II processivity, Tat induces chromatin remodeling of proviral genes by recruiting the histone acetyltransferases (HATs) CREBBP, EP300 and PCAF to the chromatin. This also contributes to the increase in proviral transcription rate, especially when the provirus integrates in transcriptionally silent region of the host genome. To ensure maximal activation of the LTR, Tat mediates nuclear translocation of NF-kappa-B by interacting with host RELA. Through its interaction with host TBP, Tat may also modulate transcription initiation. Tat can reactivate a latently infected cell by penetrating in it and transactivating its LTR promoter. In the cytoplasm, Tat is thought to act as a translational activator of HIV-1 mRNAs. Extracellular circulating Tat can be endocytosed by surrounding uninfected cells via the binding to several surface receptors such as CD26, CXCR4, heparan sulfate proteoglycans (HSPG) or LDLR. Neurons are rarely infected, but they internalize Tat via their LDLR. Through its interaction with nuclear HATs, Tat is potentially able to control the acetylation-dependent cellular gene expression. Modulates the expression of many cellular genes involved in cell survival, proliferation or in coding for cytokines or cytokine receptors. Tat plays a role in T-cell and neurons apoptosis. Tat induced neurotoxicity and apoptosis probably contribute to neuroAIDS. Circulating Tat also acts as a chemokine-like and/or growth factor-like molecule that binds to specific receptors on the surface of the cells, affecting many cellular pathways. In the vascular system, Tat binds to ITGAV/ITGB3 and ITGA5/ITGB1 integrins dimers at the surface of endothelial cells and competes with bFGF for heparin-binding sites, leading to an excess of soluble bFGF. The sequence is that of Protein Tat from Homo sapiens (Human).